Here is a 129-residue protein sequence, read N- to C-terminus: Phosphoribosyl-AMP cyclohydrolase (129 aa).

A Mg(2+)-binding site is contributed by D79. Residue C80 participates in Zn(2+) binding. Mg(2+) is bound by residues D81 and D83. C96 and C103 together coordinate Zn(2+).

Belongs to the PRA-CH family. As to quaternary structure, homodimer. It depends on Mg(2+) as a cofactor. Zn(2+) is required as a cofactor.

The protein localises to the cytoplasm. It carries out the reaction 1-(5-phospho-beta-D-ribosyl)-5'-AMP + H2O = 1-(5-phospho-beta-D-ribosyl)-5-[(5-phospho-beta-D-ribosylamino)methylideneamino]imidazole-4-carboxamide. It participates in amino-acid biosynthesis; L-histidine biosynthesis; L-histidine from 5-phospho-alpha-D-ribose 1-diphosphate: step 3/9. Catalyzes the hydrolysis of the adenine ring of phosphoribosyl-AMP. This is Phosphoribosyl-AMP cyclohydrolase from Magnetococcus marinus (strain ATCC BAA-1437 / JCM 17883 / MC-1).